A 383-amino-acid polypeptide reads, in one-letter code: UDP-N-acetylglucosamine--N-acetylmuramyl-(pentapeptide) pyrophosphoryl-undecaprenol N-acetylglucosamine transferase (383 aa).

Residues 10-12 (TGG), N124, R165, S190, I245, and Q290 each bind UDP-N-acetyl-alpha-D-glucosamine. The interval 364-383 (PFGQAREPGQKPARPPDLAS) is disordered.

The protein belongs to the glycosyltransferase 28 family. MurG subfamily.

Its subcellular location is the cell inner membrane. It catalyses the reaction di-trans,octa-cis-undecaprenyl diphospho-N-acetyl-alpha-D-muramoyl-L-alanyl-D-glutamyl-meso-2,6-diaminopimeloyl-D-alanyl-D-alanine + UDP-N-acetyl-alpha-D-glucosamine = di-trans,octa-cis-undecaprenyl diphospho-[N-acetyl-alpha-D-glucosaminyl-(1-&gt;4)]-N-acetyl-alpha-D-muramoyl-L-alanyl-D-glutamyl-meso-2,6-diaminopimeloyl-D-alanyl-D-alanine + UDP + H(+). The protein operates within cell wall biogenesis; peptidoglycan biosynthesis. Cell wall formation. Catalyzes the transfer of a GlcNAc subunit on undecaprenyl-pyrophosphoryl-MurNAc-pentapeptide (lipid intermediate I) to form undecaprenyl-pyrophosphoryl-MurNAc-(pentapeptide)GlcNAc (lipid intermediate II). This Anaeromyxobacter dehalogenans (strain 2CP-C) protein is UDP-N-acetylglucosamine--N-acetylmuramyl-(pentapeptide) pyrophosphoryl-undecaprenol N-acetylglucosamine transferase.